Here is a 428-residue protein sequence, read N- to C-terminus: Putative UDP-glucose 6-dehydrogenase YtcA (428 aa).

The first 23 residues, 1–23 (MKICVVGAGYVGLTLSAALASIG), serve as a signal peptide directing secretion. NAD(+) contacts are provided by residues 2–19 (KICVVGAGYVGLTLSAAL), V11, D30, K35, T118, and E152. Substrate contacts are provided by residues 148 to 152 (EFLRE), K203, N207, 248 to 252 (FLQAG), and G256. The active-site Nucleophile is C259. NAD(+) is bound at residue K262. K319 lines the substrate pocket. R326 is a binding site for NAD(+).

It belongs to the UDP-glucose/GDP-mannose dehydrogenase family.

It catalyses the reaction UDP-alpha-D-glucose + 2 NAD(+) + H2O = UDP-alpha-D-glucuronate + 2 NADH + 3 H(+). It participates in nucleotide-sugar biosynthesis; UDP-alpha-D-glucuronate biosynthesis; UDP-alpha-D-glucuronate from UDP-alpha-D-glucose: step 1/1. Functionally, catalyzes the conversion of UDP-glucose into UDP-glucuronate, one of the precursors of teichuronic acid. The sequence is that of Putative UDP-glucose 6-dehydrogenase YtcA (ytcA) from Bacillus subtilis (strain 168).